Consider the following 545-residue polypeptide: Afadin- and alpha-actinin-binding protein B (545 aa).

Coiled coils occupy residues 106-287 (RSKE…SQRK) and 358-442 (ARGD…AIRL). The segment at 497–545 (HDRHLASSGDHYQRPRKTLPITPSSKHSLTQRESVAWRDSSISPNGTDF) is disordered. Composition is skewed to polar residues over residues 517–529 (ITPS…TQRE) and 536–545 (SSISPNGTDF).

The protein belongs to the ADIP family. As to quaternary structure, interacts with WRAP73.

The protein resides in the cell junction. Its subcellular location is the adherens junction. The protein localises to the cytoplasm. It localises to the cytoskeleton. It is found in the microtubule organizing center. The protein resides in the centrosome. Its subcellular location is the centriolar satellite. Its function is as follows. Belongs to an adhesion system, which plays a role in the organization of homotypic, interneuronal and heterotypic cell-cell adherens junctions (AJs). Involved in cell movement. Acts as a centrosome maturation factor, probably by maintaining the integrity of the pericentriolar material and proper microtubule nucleation at mitotic spindle poles. The function seems to implicate at least in part WRAP73; the SSX2IP:WRAP73 complex is proposed to act as regulator of spindle anchoring at the mitotic centrosome. In Xenopus laevis (African clawed frog), this protein is Afadin- and alpha-actinin-binding protein B (ssx2ip-b).